The sequence spans 1147 residues: ATP-dependent helicase/deoxyribonuclease subunit B (1147 aa).

Residue 8 to 15 (GRAGSGKS) participates in ATP binding. [4Fe-4S] cluster-binding residues include Cys786, Cys1106, Cys1109, and Cys1115.

Belongs to the helicase family. AddB/RexB type 1 subfamily. In terms of assembly, heterodimer of AddA and AddB. Mg(2+) is required as a cofactor. Requires [4Fe-4S] cluster as cofactor.

In terms of biological role, the heterodimer acts as both an ATP-dependent DNA helicase and an ATP-dependent, dual-direction single-stranded exonuclease. Recognizes the chi site generating a DNA molecule suitable for the initiation of homologous recombination. The AddB subunit has 5' -&gt; 3' nuclease activity but not helicase activity. The polypeptide is ATP-dependent helicase/deoxyribonuclease subunit B (Clostridium botulinum (strain Loch Maree / Type A3)).